The chain runs to 879 residues: Alanine--tRNA ligase (879 aa).

Positions 566, 570, 668, and 672 each coordinate Zn(2+).

Belongs to the class-II aminoacyl-tRNA synthetase family. Zn(2+) is required as a cofactor.

The protein resides in the cytoplasm. The enzyme catalyses tRNA(Ala) + L-alanine + ATP = L-alanyl-tRNA(Ala) + AMP + diphosphate. Its function is as follows. Catalyzes the attachment of alanine to tRNA(Ala) in a two-step reaction: alanine is first activated by ATP to form Ala-AMP and then transferred to the acceptor end of tRNA(Ala). Also edits incorrectly charged Ser-tRNA(Ala) and Gly-tRNA(Ala) via its editing domain. The sequence is that of Alanine--tRNA ligase from Clostridium botulinum (strain Loch Maree / Type A3).